A 108-amino-acid polypeptide reads, in one-letter code: MADSDKHGDEGPSTGVVVKAKPKTKKPSMYKVLMLNDDYTPMEFVVHVLERFFNKNREEATRIMLHVHRRGVGVCGVFTYEVAETKVTQVMDFARQHQHPLQCTLEKD.

A compositionally biased stretch (basic and acidic residues) spans 1 to 10; it reads MADSDKHGDE. The disordered stretch occupies residues 1 to 21; that stretch reads MADSDKHGDEGPSTGVVVKAK.

This sequence belongs to the ClpS family. In terms of assembly, binds to the N-terminal domain of the chaperone ClpA.

Its function is as follows. Involved in the modulation of the specificity of the ClpAP-mediated ATP-dependent protein degradation. The polypeptide is ATP-dependent Clp protease adapter protein ClpS (Rhodospirillum centenum (strain ATCC 51521 / SW)).